The chain runs to 164 residues: Protein phosphatase 1 regulatory subunit 14C (164 aa).

The span at Met-1–Ala-19 shows a compositional bias: gly residues. The disordered stretch occupies residues Met-1 to Thr-72. Ser-2 is subject to N-acetylserine. Residue Ser-25 is modified to Phosphoserine. An Omega-N-methylarginine modification is found at Arg-27. The residue at position 33 (Ser-33) is a Phosphoserine. Over residues Val-50–Gln-62 the composition is skewed to low complexity. Thr-72 is modified (phosphothreonine; by ILK1).

It belongs to the PP1 inhibitor family. In terms of processing, has over 600-fold higher inhibitory activity when phosphorylated, creating a molecular switch for regulating the phosphorylation status of PPP1CA substrates and smooth muscle contraction. The main inhibitory site appears to be Thr-72.

It localises to the endomembrane system. Its function is as follows. Inhibitor of the PP1 regulatory subunit PPP1CA. This chain is Protein phosphatase 1 regulatory subunit 14C (Ppp1r14c), found in Rattus norvegicus (Rat).